The following is a 234-amino-acid chain: Adenosine 5'-phosphosulfate reductase (234 aa).

[4Fe-4S] cluster is bound by residues Cys120, Cys121, Cys203, and Cys206. The active-site Nucleophile; cysteine thiosulfonate intermediate is Cys229.

It belongs to the PAPS reductase family. CysH subfamily. The cofactor is [4Fe-4S] cluster.

The protein localises to the cytoplasm. It carries out the reaction [thioredoxin]-disulfide + sulfite + AMP + 2 H(+) = adenosine 5'-phosphosulfate + [thioredoxin]-dithiol. Its pathway is sulfur metabolism; hydrogen sulfide biosynthesis; sulfite from sulfate. In terms of biological role, catalyzes the formation of sulfite from adenosine 5'-phosphosulfate (APS) using thioredoxin as an electron donor. The polypeptide is Adenosine 5'-phosphosulfate reductase (Bacillus cereus (strain Q1)).